A 592-amino-acid chain; its full sequence is Aspartate--tRNA(Asp/Asn) ligase (592 aa).

Glu177 contributes to the L-aspartate binding site. The tract at residues 201–204 is aspartate; it reads QIFK. L-aspartate-binding residues include Arg223 and His452. 223 to 225 is a binding site for ATP; the sequence is RDE. Glu486 provides a ligand contact to ATP. Arg493 lines the L-aspartate pocket. 538–541 lines the ATP pocket; that stretch reads GIDR.

This sequence belongs to the class-II aminoacyl-tRNA synthetase family. Type 1 subfamily. As to quaternary structure, homodimer.

Its subcellular location is the cytoplasm. The enzyme catalyses tRNA(Asx) + L-aspartate + ATP = L-aspartyl-tRNA(Asx) + AMP + diphosphate. Its function is as follows. Aspartyl-tRNA synthetase with relaxed tRNA specificity since it is able to aspartylate not only its cognate tRNA(Asp) but also tRNA(Asn). Reaction proceeds in two steps: L-aspartate is first activated by ATP to form Asp-AMP and then transferred to the acceptor end of tRNA(Asp/Asn). This Anaplasma marginale (strain Florida) protein is Aspartate--tRNA(Asp/Asn) ligase.